Reading from the N-terminus, the 499-residue chain is Probable cytosol aminopeptidase (499 aa).

Mn(2+)-binding residues include lysine 263 and aspartate 268. Lysine 275 is a catalytic residue. Mn(2+) contacts are provided by aspartate 286, aspartate 345, and glutamate 347. Arginine 349 is an active-site residue.

It belongs to the peptidase M17 family. The cofactor is Mn(2+).

The protein localises to the cytoplasm. The catalysed reaction is Release of an N-terminal amino acid, Xaa-|-Yaa-, in which Xaa is preferably Leu, but may be other amino acids including Pro although not Arg or Lys, and Yaa may be Pro. Amino acid amides and methyl esters are also readily hydrolyzed, but rates on arylamides are exceedingly low.. It carries out the reaction Release of an N-terminal amino acid, preferentially leucine, but not glutamic or aspartic acids.. Functionally, presumably involved in the processing and regular turnover of intracellular proteins. Catalyzes the removal of unsubstituted N-terminal amino acids from various peptides. The sequence is that of Probable cytosol aminopeptidase (pepA) from Chlamydia muridarum (strain MoPn / Nigg).